A 519-amino-acid chain; its full sequence is uncharacterized protein (519 aa).

The next 14 membrane-spanning stretches (helical) occupy residues 37 to 57, 82 to 102, 114 to 134, 146 to 166, 175 to 195, 209 to 229, 240 to 260, 269 to 289, 309 to 329, 337 to 357, 373 to 393, 402 to 422, 434 to 454, and 475 to 495; these read ISMS…AQLM, GQLS…ILIA, MFVL…FSYY, ALTG…LGRV, LIFA…SVFS, WTTA…IPHI, FDYL…FSWN, VPYV…FVLV, CVLI…YYLW, FATP…GCAA, IMVV…TAPI, FVSI…ATLM, IAAS…LGIA, and AWYM…LTVF.

The protein belongs to the major facilitator superfamily.

It localises to the endoplasmic reticulum. It is found in the membrane. This is an uncharacterized protein from Schizosaccharomyces pombe (strain 972 / ATCC 24843) (Fission yeast).